The chain runs to 346 residues: Protein pelota homolog (346 aa).

The protein belongs to the eukaryotic release factor 1 family. Pelota subfamily. As to quaternary structure, monomer. The cofactor is a divalent metal cation.

It localises to the cytoplasm. In terms of biological role, may function in recognizing stalled ribosomes, interact with stem-loop structures in stalled mRNA molecules, and effect endonucleolytic cleavage of the mRNA. May play a role in the release non-functional ribosomes and degradation of damaged mRNAs. Has endoribonuclease activity. The polypeptide is Protein pelota homolog (Ignicoccus hospitalis (strain KIN4/I / DSM 18386 / JCM 14125)).